The sequence spans 160 residues: Phosphopantetheine adenylyltransferase (160 aa).

A substrate-binding site is contributed by serine 10. ATP is bound by residues 10-11 and histidine 18; that span reads SF. Substrate is bound by residues lysine 42, leucine 74, and arginine 88. Residues 89–91, glutamate 99, and 124–130 each bind ATP; these read GLR and YSFLSSS.

This sequence belongs to the bacterial CoaD family. Homohexamer. It depends on Mg(2+) as a cofactor.

It localises to the cytoplasm. It catalyses the reaction (R)-4'-phosphopantetheine + ATP + H(+) = 3'-dephospho-CoA + diphosphate. It participates in cofactor biosynthesis; coenzyme A biosynthesis; CoA from (R)-pantothenate: step 4/5. Its function is as follows. Reversibly transfers an adenylyl group from ATP to 4'-phosphopantetheine, yielding dephospho-CoA (dPCoA) and pyrophosphate. The sequence is that of Phosphopantetheine adenylyltransferase from Bacillus velezensis (strain DSM 23117 / BGSC 10A6 / LMG 26770 / FZB42) (Bacillus amyloliquefaciens subsp. plantarum).